The primary structure comprises 114 residues: T cell receptor beta variable 6-1 (114 aa).

An N-terminal signal peptide occupies residues 1-21 (MSIGLLCCVAFSLLWASPVNA). An Ig-like domain is found at 22–114 (GVTQTPKFQV…TSVYFCASSE (93 aa)). Cysteine 42 and cysteine 110 are disulfide-bonded. Residue asparagine 84 is glycosylated (N-linked (GlcNAc...) asparagine).

Alpha-beta TR is a heterodimer composed of an alpha and beta chain; disulfide-linked. The alpha-beta TR is associated with the transmembrane signaling CD3 coreceptor proteins to form the TR-CD3 (TcR or TCR). The assembly of alpha-beta TR heterodimers with CD3 occurs in the endoplasmic reticulum where a single alpha-beta TR heterodimer associates with one CD3D-CD3E heterodimer, one CD3G-CD3E heterodimer and one CD247 homodimer forming a stable octameric structure. CD3D-CD3E and CD3G-CD3E heterodimers preferentially associate with TR alpha and TR beta chains, respectively. The association of the CD247 homodimer is the last step of TcR assembly in the endoplasmic reticulum and is required for transport to the cell surface.

The protein resides in the cell membrane. V region of the variable domain of T cell receptor (TR) beta chain that participates in the antigen recognition. Alpha-beta T cell receptors are antigen specific receptors which are essential to the immune response and are present on the cell surface of T lymphocytes. Recognize peptide-major histocompatibility (MH) (pMH) complexes that are displayed by antigen presenting cells (APC), a prerequisite for efficient T cell adaptive immunity against pathogens. Binding of alpha-beta TR to pMH complex initiates TR-CD3 clustering on the cell surface and intracellular activation of LCK that phosphorylates the ITAM motifs of CD3G, CD3D, CD3E and CD247 enabling the recruitment of ZAP70. In turn ZAP70 phosphorylates LAT, which recruits numerous signaling molecules to form the LAT signalosome. The LAT signalosome propagates signal branching to three major signaling pathways, the calcium, the mitogen-activated protein kinase (MAPK) kinase and the nuclear factor NF-kappa-B (NF-kB) pathways, leading to the mobilization of transcription factors that are critical for gene expression and essential for T cell growth and differentiation. The T cell repertoire is generated in the thymus, by V-(D)-J rearrangement. This repertoire is then shaped by intrathymic selection events to generate a peripheral T cell pool of self-MH restricted, non-autoaggressive T cells. Post-thymic interaction of alpha-beta TR with the pMH complexes shapes TR structural and functional avidity. The chain is T cell receptor beta variable 6-1 from Homo sapiens (Human).